A 594-amino-acid polypeptide reads, in one-letter code: Probable glucose transporter rco-3 (594 aa).

Over M1 to N13 the chain is Cytoplasmic. A helical transmembrane segment spans residues V14 to L34. The Extracellular portion of the chain corresponds to L35–S73. Residues A74 to L94 traverse the membrane as a helical segment. Over G95–S103 the chain is Cytoplasmic. Residues L104 to I124 traverse the membrane as a helical segment. Position 125 (D125) is a topological domain, extracellular. A helical membrane pass occupies residues L126–P146. Over L147–G159 the chain is Cytoplasmic. A helical transmembrane segment spans residues T160 to N180. The Extracellular segment spans residues I181–R193. A helical transmembrane segment spans residues V194–P214. Topologically, residues E215 to Q293 are cytoplasmic. The chain crosses the membrane as a helical span at residues L294 to G314. The Extracellular portion of the chain corresponds to N315–K318. A helical transmembrane segment spans residues I319–E339. At S340 to R345 the chain is on the cytoplasmic side. Residues L346 to T366 form a helical membrane-spanning segment. Residues A367 to K378 are Extracellular-facing. N-linked (GlcNAc...) asparagine glycosylation occurs at N372. A helical membrane pass occupies residues V379–T403. At S404–S415 the chain is on the cytoplasmic side. A helical transmembrane segment spans residues M416–Y436. Residues M437–K454 are Extracellular-facing. The chain crosses the membrane as a helical span at residues V455 to Y475. Topologically, residues E476–Y594 are cytoplasmic. Residues D512 to Y594 are disordered. Over residues Q524 to G576 the composition is skewed to low complexity.

The protein belongs to the major facilitator superfamily. Sugar transporter (TC 2.A.1.1) family.

The protein localises to the membrane. Functionally, probable glucose transporter. Involved in sugar transport, carbon catabolite repression, and initiation of conidiophore development. The sequence is that of Probable glucose transporter rco-3 (rco-3) from Neurospora crassa (strain ATCC 24698 / 74-OR23-1A / CBS 708.71 / DSM 1257 / FGSC 987).